The following is a 365-amino-acid chain: 3-isopropylmalate dehydrogenase (365 aa).

80 to 91 (GPKWGTGEVRPE) contacts NAD(+). Substrate-binding residues include R98, R108, R137, and D226. The Mg(2+) site is built by D226, D251, and D255. 290-301 (GSAPDLPKNKVN) lines the NAD(+) pocket.

Belongs to the isocitrate and isopropylmalate dehydrogenases family. Homodimer. Mg(2+) is required as a cofactor. Mn(2+) serves as cofactor.

It is found in the cytoplasm. The enzyme catalyses (2R,3S)-3-isopropylmalate + NAD(+) = 4-methyl-2-oxopentanoate + CO2 + NADH. Its pathway is amino-acid biosynthesis; L-leucine biosynthesis; L-leucine from 3-methyl-2-oxobutanoate: step 3/4. Its function is as follows. Catalyzes the oxidation of 3-carboxy-2-hydroxy-4-methylpentanoate (3-isopropylmalate) to 3-carboxy-4-methyl-2-oxopentanoate. The product decarboxylates to 4-methyl-2 oxopentanoate. The chain is 3-isopropylmalate dehydrogenase (LEU2) from Candida boidinii (Yeast).